Here is a 287-residue protein sequence, read N- to C-terminus: 4-diphosphocytidyl-2-C-methyl-D-erythritol kinase (287 aa).

K11 is an active-site residue. Residue 93-103 (PFGAGLGGGSS) coordinates ATP. D135 is an active-site residue.

The protein belongs to the GHMP kinase family. IspE subfamily.

The enzyme catalyses 4-CDP-2-C-methyl-D-erythritol + ATP = 4-CDP-2-C-methyl-D-erythritol 2-phosphate + ADP + H(+). It participates in isoprenoid biosynthesis; isopentenyl diphosphate biosynthesis via DXP pathway; isopentenyl diphosphate from 1-deoxy-D-xylulose 5-phosphate: step 3/6. Its function is as follows. Catalyzes the phosphorylation of the position 2 hydroxy group of 4-diphosphocytidyl-2C-methyl-D-erythritol. The sequence is that of 4-diphosphocytidyl-2-C-methyl-D-erythritol kinase from Pelodictyon phaeoclathratiforme (strain DSM 5477 / BU-1).